The following is a 164-amino-acid chain: Ribosome maturation factor RimM (164 aa).

The 72-residue stretch at 93 to 164 folds into the PRC barrel domain; sequence DSEYYVANLN…FVVIVPPEFI (72 aa).

It belongs to the RimM family. Binds ribosomal protein uS19.

Its subcellular location is the cytoplasm. Its function is as follows. An accessory protein needed during the final step in the assembly of 30S ribosomal subunit, possibly for assembly of the head region. Essential for efficient processing of 16S rRNA. May be needed both before and after RbfA during the maturation of 16S rRNA. It has affinity for free ribosomal 30S subunits but not for 70S ribosomes. This Orientia tsutsugamushi (strain Boryong) (Rickettsia tsutsugamushi) protein is Ribosome maturation factor RimM.